A 448-amino-acid polypeptide reads, in one-letter code: GA-binding protein subunit beta-2 (448 aa).

ANK repeat units lie at residues 5–34 (DLGK…PFTT), 37–66 (LGTS…SRDA), 70–99 (VDRT…DVNA), 103–132 (LKMT…DVHA), and 136–166 (FDKS…QVNV). Ser256 carries the post-translational modification Phosphoserine. Disordered stretches follow at residues 325–354 (EEEE…GNER) and 420–448 (ELEE…TVSS). Over residues 337-354 (RIGEKTNSVEESKEGNER) the composition is skewed to basic and acidic residues. A coiled-coil region spans residues 345-395 (VEESKEGNERELLQQQLQEANRRAQEYRHQLLKKEQEAEQYRLKLEAIARQ). The segment covering 428-448 (VTGSAGTTEPHTRVSMATVSS) has biased composition (polar residues).

Heterotetramer of two alpha and two beta subunits. The C-terminal is necessary for the formation of a heterotetrameric GABP-alpha-2/beta-2 complex, and also facilitates homotypic dimerization. Interacts with ADGRB2.

The protein localises to the nucleus. May function as transcription factor capable of interacting with purine rich repeats (GA repeats). The protein is GA-binding protein subunit beta-2 (GABPB2) of Homo sapiens (Human).